Consider the following 493-residue polypeptide: Sorting nexin-4 (493 aa).

The segment at 1–67 (MDQDGFHSIA…KAGEAGDVGV (67 aa)) is disordered. A compositionally biased stretch (low complexity) spans 37–48 (SISPSSAQPPAS). The 123-residue stretch at 89 to 211 (WMDVQVREPA…DFLQSTEWSV (123 aa)) folds into the PX domain. The a 1,2-diacyl-sn-glycero-3-phospho-(1D-myo-inositol-3-phosphate) site is built by arginine 132, lysine 158, and arginine 177.

This sequence belongs to the sorting nexin family.

The protein resides in the cytoplasm. It localises to the cytosol. It is found in the preautophagosomal structure membrane. The protein localises to the endosome membrane. Sorting nexin, involved in the separation or division of vacuoles throughout the entire life cycle of the cells. Involved in retrieval of late-Golgi SNAREs from post-Golgi endosomes to the trans-Golgi network, for cytoplasm to vacuole transport (Cvt), and autophagy of large cargos including mitophagy, pexophagy and glycophagy. In Cryptococcus neoformans var. neoformans serotype D (strain B-3501A) (Filobasidiella neoformans), this protein is Sorting nexin-4 (SNX4).